Reading from the N-terminus, the 327-residue chain is Olfactory receptor 51T1 (327 aa).

The Extracellular portion of the chain corresponds to 1-27; it reads MAIFNNTTSSSSNFLLTAFPGLECAHV. N5 and N6 each carry an N-linked (GlcNAc...) asparagine glycan. A helical transmembrane segment spans residues 28–48; it reads WISIPVCCLYTIALLGNSMIF. The Cytoplasmic segment spans residues 49 to 56; the sequence is LVIITKRR. A helical transmembrane segment spans residues 57–77; it reads LHKPMYYFLSMLAAVDLCLTI. Topologically, residues 78-101 are extracellular; it reads TTLPTVLGVLWFHAREISFKACFI. A helical membrane pass occupies residues 102–122; sequence QMFFVHAFSLLESSVLVAMAF. Over 123–141 the chain is Cytoplasmic; it reads DRFVAICNPLNYATILTDR. Residues 142 to 162 traverse the membrane as a helical segment; that stretch reads MVLVIGLVICIRPAVFLLPLL. Topologically, residues 163–198 are extracellular; the sequence is VAINTVSFHGGHELSHPFCYHPEVIKYTYSKPWISS. Residues 199–219 traverse the membrane as a helical segment; the sequence is FWGLFLQLYLNGTDVLFILFS. At 220 to 239 the chain is on the cytoplasmic side; it reads YVLILRTVLGIVARKKQQKA. The chain crosses the membrane as a helical span at residues 240 to 260; sequence LSTCVCHICAVTIFYVPLISL. At 261–275 the chain is on the extracellular side; it reads SLAHRLFHSTPRVLC. Residues 276 to 296 form a helical membrane-spanning segment; that stretch reads STLANIYLLLPPVLNPIIYSL. Topologically, residues 297–327 are cytoplasmic; it reads KTKTIRQAMFQLLQSKGSWGFNVRGLRGRWD.

It belongs to the G-protein coupled receptor 1 family.

The protein resides in the cell membrane. Functionally, odorant receptor. The protein is Olfactory receptor 51T1 (OR51T1) of Homo sapiens (Human).